A 124-amino-acid chain; its full sequence is Large ribosomal subunit protein bL12 (124 aa).

The disordered stretch occupies residues 93 to 124 (GAPSTVKEGASKDEAEEAKKKLEEAGASVELK). The segment covering 101–116 (GASKDEAEEAKKKLEE) has biased composition (basic and acidic residues).

The protein belongs to the bacterial ribosomal protein bL12 family. As to quaternary structure, homodimer. Part of the ribosomal stalk of the 50S ribosomal subunit. Forms a multimeric L10(L12)X complex, where L10 forms an elongated spine to which 2 to 4 L12 dimers bind in a sequential fashion. Binds GTP-bound translation factors.

In terms of biological role, forms part of the ribosomal stalk which helps the ribosome interact with GTP-bound translation factors. Is thus essential for accurate translation. The polypeptide is Large ribosomal subunit protein bL12 (Marinobacter nauticus (strain ATCC 700491 / DSM 11845 / VT8) (Marinobacter aquaeolei)).